The following is a 2009-amino-acid chain: Sodium channel protein type 1 subunit alpha (2009 aa).

Topologically, residues Met-1–Ser-128 are cytoplasmic. Positions Arg-28–Gly-48 are enriched in basic and acidic residues. The segment at Arg-28 to Asn-60 is disordered. Residues Ile-110–Gln-454 form an I repeat. Residues Leu-129–Thr-146 form a helical membrane-spanning segment. The Extracellular segment spans residues Met-147 to Asp-152. Residues Trp-153–Gly-177 traverse the membrane as a helical segment. The Cytoplasmic portion of the chain corresponds to Phe-178–Asp-188. Residues Pro-189–Glu-205 traverse the membrane as a helical segment. Residues Phe-206–Ser-213 lie on the Extracellular side of the membrane. Residues Ala-214–Thr-235 traverse the membrane as a helical segment. Over Ile-236–Lys-245 the chain is Cytoplasmic. The chain crosses the membrane as a helical span at residues Lys-246–Phe-269. The Extracellular portion of the chain corresponds to Met-270 to Ser-369. 2 cysteine pairs are disulfide-bonded: Cys-277–Cys-345 and Cys-336–Cys-351. N-linked (GlcNAc...) asparagine glycans are attached at residues Asn-295, Asn-301, Asn-306, and Asn-338. The pore-forming intramembrane region spans Trp-370–Trp-384. Over Glu-385 to Lys-397 the chain is Extracellular. The helical transmembrane segment at Thr-398–Ala-423 threads the bilayer. Residues Met-424 to Pro-768 are Cytoplasmic-facing. Positions Gln-455–Ser-528 are disordered. The span at Glu-456–Ala-466 shows a compositional bias: low complexity. Ser-470 is subject to Phosphoserine. The span at Leu-479 to Lys-492 shows a compositional bias: low complexity. Residues Lys-495 to Gln-506 show a composition bias toward basic residues. Over residues Lys-507 to Ser-528 the composition is skewed to basic and acidic residues. 6 positions are modified to phosphoserine: Ser-523, Ser-525, Ser-550, Ser-551, Ser-607, and Ser-730. Positions Val-584–Arg-627 are disordered. Over residues Asp-593–Ser-607 the composition is skewed to basic and acidic residues. An II repeat occupies Cys-750–Gly-1022. Residues Phe-769–Met-787 form a helical membrane-spanning segment. The Extracellular portion of the chain corresponds to Glu-788–Asn-797. Residues His-798 to Ile-820 form a helical membrane-spanning segment. The Cytoplasmic segment spans residues Ala-821–Glu-830. A helical transmembrane segment spans residues Gly-831–Leu-849. The Extracellular segment spans residues Ala-850–Gly-854. The helical transmembrane segment at Leu-855–Pro-874 threads the bilayer. Residues Thr-875–Gly-891 are Cytoplasmic-facing. The chain crosses the membrane as a helical span at residues Asn-892 to Phe-912. The Extracellular portion of the chain corresponds to Gly-913–Phe-938. An intrachain disulfide couples Cys-921 to Cys-927. The pore-forming intramembrane region spans His-939 to Trp-952. The Extracellular portion of the chain corresponds to Ile-953 to Gln-965. A disulfide bridge connects residues Cys-959 and Cys-968. A helical membrane pass occupies residues Ala-966–Leu-992. Over Ser-993–Asn-1218 the chain is Cytoplasmic. A disordered region spans residues Thr-1129 to Ala-1163. Residues Arg-1200–Leu-1514 form an III repeat. The chain crosses the membrane as a helical span at residues Trp-1219–Phe-1237. At Glu-1238–Thr-1250 the chain is on the extracellular side. Residues Met-1251–Tyr-1276 form a helical membrane-spanning segment. Residues Gln-1277–Thr-1278 are Cytoplasmic-facing. The chain crosses the membrane as a helical span at residues Tyr-1279–Leu-1304. Over Gly-1305 to Lys-1313 the chain is Extracellular. The chain crosses the membrane as a helical span at residues Ser-1314–Gly-1332. The Cytoplasmic portion of the chain corresponds to Met-1333 to Pro-1345. A helical transmembrane segment spans residues Ser-1346–Phe-1369. The Extracellular portion of the chain corresponds to Ala-1370–Phe-1415. Cys-1376 and Cys-1396 are joined by a disulfide. The segment at residues Asp-1416–Gly-1433 is an intramembrane region (pore-forming). Over Trp-1434 to Leu-1457 the chain is Extracellular. Residues Tyr-1458–Ile-1483 traverse the membrane as a helical segment. Topologically, residues Asp-1484–Gln-1541 are cytoplasmic. At Ser-1516 the chain carries Phosphoserine; by PKC. The IV repeat unit spans residues Ile-1523–Gln-1821. The helical transmembrane segment at Val-1542–Val-1560 threads the bilayer. Over Glu-1561–Ser-1571 the chain is Extracellular. The interval Glu-1561 to Ser-1571 is S1-S2 loop of repeat IV. Residues Ile-1572–Ile-1593 traverse the membrane as a helical segment. Over Ser-1594–Thr-1601 the chain is Cytoplasmic. The helical transmembrane segment at Ile-1602–Glu-1623 threads the bilayer. An S3b-S4 loop of repeat IV region spans residues Met-1619–Arg-1636. Residues Leu-1624–Arg-1636 lie on the Extracellular side of the membrane. Residues Val-1637–Gly-1655 traverse the membrane as a helical segment. The Cytoplasmic portion of the chain corresponds to Ile-1656–Met-1665. A helical membrane pass occupies residues Ser-1666–Gly-1688. Topologically, residues Met-1689–Gly-1711 are extracellular. Residues Asn-1712–Trp-1726 constitute an intramembrane region (pore-forming). The Extracellular segment spans residues Asp-1727–Pro-1759. Cysteines 1741 and 1756 form a disulfide. The chain crosses the membrane as a helical span at residues Ser-1760–Asn-1788. Residues Phe-1789 to Lys-2009 lie on the Cytoplasmic side of the membrane. Residues Glu-1915–Lys-1944 enclose the IQ domain. Residues Pro-1984 to Lys-2009 are disordered. The segment covering Arg-1988 to Lys-2009 has biased composition (basic and acidic residues).

Belongs to the sodium channel (TC 1.A.1.10) family. Nav1.1/SCN1A subfamily. As to quaternary structure, the Nav1.1 voltage-gated sodium channel consists of an ion-conducting alpha subunit SCN1A which is functional on its own regulated by one or more beta-1 (SCN1B), beta-2 (SCN2B), beta-3 (SCN3B) and beta-4 (SCN4B) subunits. SCN1B and SCN3B are non-covalently associated with SCN1A. SCN2B and SCN4B are disulfide-linked to SCN1A. SCN1B regulates both the expression at the plasma membrane and the voltage dependence of Nav1.1 inactivation. SCN3B and SCN4B reduce Nav1.1 conductance. Probably interacts with TMEM233; modulates the gating properties of NaV1.1. Interacts with FGF13; regulates the steady-state inactivation of Nav.1.1. Post-translationally, phosphorylation at Ser-1516 by PKC in a highly conserved cytoplasmic loop slows inactivation of the sodium channel and reduces peak sodium currents. In terms of tissue distribution, present in cerebellar Purkinje neurons (at protein level). Expressed by myelinated, non-C-fiber neurons in sensory ganglia.

The protein resides in the cell membrane. The enzyme catalyses Na(+)(in) = Na(+)(out). Its activity is regulated as follows. Activated by the spider toxins Hm1a and Hm1b (H.maculata, AC P60992 and AC P0DOC5) eliciting acute pain and mechanical allodynia. In terms of biological role, pore-forming subunit of Nav1.1, a voltage-gated sodium (Nav) channel that directly mediates the depolarizing phase of action potentials in excitable membranes. Navs, also called VGSCs (voltage-gated sodium channels) or VDSCs (voltage-dependent sodium channels), operate by switching between closed and open conformations depending on the voltage difference across the membrane. In the open conformation they allow Na(+) ions to selectively pass through the pore, along their electrochemical gradient. The influx of Na(+) ions provokes membrane depolarization, initiating the propagation of electrical signals throughout cells and tissues. By regulating the excitability of neurons, ensures that they respond appropriately to synaptic inputs, maintaining the balance between excitation and inhibition in brain neural circuits. Nav1.1 plays a role in controlling the excitability and action potential propagation from somatosensory neurons, thereby contributing to the sensory perception of mechanically-induced pain. This is Sodium channel protein type 1 subunit alpha from Mus musculus (Mouse).